Reading from the N-terminus, the 698-residue chain is tRNA (guanine(37)-N(1))-methyltransferase (698 aa).

The disordered stretch occupies residues Ser-207–Gly-242. S-adenosyl-L-methionine is bound by residues His-427, Asp-465 to Leu-466, Asp-494 to Gly-495, and Asn-536.

Belongs to the class I-like SAM-binding methyltransferase superfamily. TRM5/TYW2 family. As to quaternary structure, monomer.

It localises to the mitochondrion matrix. Its subcellular location is the nucleus. The protein resides in the cytoplasm. The enzyme catalyses guanosine(37) in tRNA + S-adenosyl-L-methionine = N(1)-methylguanosine(37) in tRNA + S-adenosyl-L-homocysteine + H(+). In terms of biological role, specifically methylates the N1 position of guanosine-37 in various cytoplasmic and mitochondrial tRNAs. Methylation is not dependent on the nature of the nucleoside 5' of the target nucleoside. This is the first step in the biosynthesis of wybutosine (yW), a modified base adjacent to the anticodon of tRNAs and required for accurate decoding. The protein is tRNA (guanine(37)-N(1))-methyltransferase of Leishmania braziliensis.